The primary structure comprises 940 residues: Reticulon-3 (940 aa).

Low complexity predominate over residues 1 to 24 (MAESSAATQSPSVSSSSSGAEPST). 3 disordered regions span residues 1–32 (MAESSAATQSPSVSSSSSGAEPSTLGGGGGSP), 71–91 (SSEIYNPDPTTPLGSETLGSH), and 129–182 (DIPC…ALDL). Alanine 2 carries the N-acetylalanine modification. Over 2-771 (AESSAATQSP…KKTGFVFGTT (770 aa)) the chain is Cytoplasmic. At serine 31 the chain carries Phosphoserine. Residues serine 196, serine 204, serine 209, serine 212, serine 249, and serine 282 each carry the phosphoserine modification. 3 disordered regions span residues 314-335 (AKQQADKSPCTTESTGLDRSEH), 381-405 (KGYLSSTKEAGGKGVPDSSQPISGS), and 428-512 (EVTE…LEGQ). Over residues 430-447 (TEVDSSGESDDTVIEDTT) the composition is skewed to acidic residues. Over residues 472–490 (TSERENKETTSHETVRSEM) the composition is skewed to basic and acidic residues. Over residues 491 to 512 (YENSEQQQAHAETPTQRSLEGQ) the composition is skewed to polar residues. Phosphoserine is present on serine 508. Threonine 572 is modified (phosphothreonine). Residues serine 575, serine 576, and serine 652 each carry the phosphoserine modification. 2 disordered regions span residues 623-655 (NKLSSSETKNTKSKYSEHSRETNGGAPKVSSDL) and 672-701 (QVQAERMSPGGKLKRTFDPQSGPQNSSDIL). The span at 689–699 (DPQSGPQNSSD) shows a compositional bias: polar residues. The Reticulon domain occupies 752–940 (VHDLIFWRDV…LPGIAKKKAE (189 aa)). The segment at residues 772 to 795 (LIMLLSLAAFSVISVVSYLILALL) is an intramembrane region (helical). Over 796–852 (SVTISFRVYKSVIQAVQKSEEGHPFKAYLDVDITLSSEAFHSYMNAAMVHVNKALKL) the chain is Cytoplasmic. The segment at residues 853–875 (IIRLFLVEDLVDSLKLAVFMWLM) is an intramembrane region (helical). The Cytoplasmic segment spans residues 876–879 (TYVG). The segment at residues 880–902 (AVFNGITLLILAELLVFSVPIVY) is an intramembrane region (helical). The interaction with FADD stretch occupies residues 895–940 (VFSVPIVYEKYKTQIDHYVGIARDQTKSIVEKIQAKLPGIAKKKAE). At 903–940 (EKYKTQIDHYVGIARDQTKSIVEKIQAKLPGIAKKKAE) the chain is on the cytoplasmic side. Positions 908–910 (QID) are interaction with BACE1.

In terms of assembly, homodimer. Interacts with RTN4. Isoform 2 interacts with BACE1, BACE2, BCL2 and FADD. Interacts with ATL2. Interacts with TMEM33. Interacts with ATL1. Interacts with ZFYVE27 and with KIF5A in a ZFYVE27-dependent manner. Interacts with RIGI. Interacts with TRIM25. As to expression, present in olfactory bulb, olfactory epithelium and retina (at protein level).

It is found in the endoplasmic reticulum membrane. The protein localises to the golgi apparatus membrane. In terms of biological role, may be involved in membrane trafficking in the early secretory pathway. Inhibits BACE1 activity and amyloid precursor protein processing. May induce caspase-8 cascade and apoptosis. May favor BCL2 translocation to the mitochondria upon endoplasmic reticulum stress. Induces the formation of endoplasmic reticulum tubules. Acts also as an inflammation-resolving regulator by interacting with both TRIM25 and RIGI, subsequently impairing RIGI 'Lys-63'-linked polyubiquitination leading to IRF3 and NF-kappa-B inhibition. This chain is Reticulon-3 (Rtn3), found in Rattus norvegicus (Rat).